A 179-amino-acid polypeptide reads, in one-letter code: GTP-dependent dephospho-CoA kinase (179 aa).

The GTP site is built by D55, V57, D74, K76, and E128.

The protein belongs to the GTP-dependent DPCK family.

The enzyme catalyses 3'-dephospho-CoA + GTP = GDP + CoA + H(+). The protein operates within cofactor biosynthesis; coenzyme A biosynthesis. Catalyzes the GTP-dependent phosphorylation of the 3'-hydroxyl group of dephosphocoenzyme A to form coenzyme A (CoA). This is GTP-dependent dephospho-CoA kinase from Saccharolobus solfataricus (strain ATCC 35092 / DSM 1617 / JCM 11322 / P2) (Sulfolobus solfataricus).